A 254-amino-acid chain; its full sequence is Alcohol dehydrogenase (254 aa).

Residue 10 to 33 coordinates NAD(+); the sequence is FVAGLGGIGLDTSREIVKSGPKNL. Substrate is bound at residue serine 138. Tyrosine 151 functions as the Proton acceptor in the catalytic mechanism.

Belongs to the short-chain dehydrogenases/reductases (SDR) family. Homodimer.

The enzyme catalyses a primary alcohol + NAD(+) = an aldehyde + NADH + H(+). The catalysed reaction is a secondary alcohol + NAD(+) = a ketone + NADH + H(+). The polypeptide is Alcohol dehydrogenase (Adh) (Drosophila mimica (Fruit fly)).